The chain runs to 146 residues: Large ribosomal subunit protein uL13 (146 aa).

The protein belongs to the universal ribosomal protein uL13 family. Part of the 50S ribosomal subunit.

Functionally, this protein is one of the early assembly proteins of the 50S ribosomal subunit, although it is not seen to bind rRNA by itself. It is important during the early stages of 50S assembly. This Bdellovibrio bacteriovorus (strain ATCC 15356 / DSM 50701 / NCIMB 9529 / HD100) protein is Large ribosomal subunit protein uL13.